A 254-amino-acid chain; its full sequence is MEIDLNADLGEGCGSDEALLDLVTSANIACGWHAGGANAMRDCVRWAVQKGVSIGAHPSFHDPENFGRKEMQLPAGDIYAGVLYQLGALSAIAQAEGGRIAHVKPHGALYNQAARDPLIADAVVSAIHDFDPSLAVFGLANSVFVAAARHAGLAAVEEVFADRGYRADGSLVPRSQPGALIDDENAVLARTLDMVRERKVRAVSGEWVPLNAQTVCLHGDGPHALAFAKRIRTALEAAGVDVVAPGALQADEDA.

Belongs to the LamB/PxpA family. In terms of assembly, forms a complex composed of PxpA, PxpB and PxpC.

It catalyses the reaction 5-oxo-L-proline + ATP + 2 H2O = L-glutamate + ADP + phosphate + H(+). Catalyzes the cleavage of 5-oxoproline to form L-glutamate coupled to the hydrolysis of ATP to ADP and inorganic phosphate. This is 5-oxoprolinase subunit A from Burkholderia ambifaria (strain MC40-6).